A 217-amino-acid chain; its full sequence is Ribosome maturation factor RimM (217 aa).

The PRC barrel domain occupies 115-186 (EDAWYDNQLV…TVTLTPPPGL (72 aa)). Residues 181–217 (TPPPGLFEDLPDDAPAAGDESEPVSPPVTAEETPGGE) form a disordered region.

This sequence belongs to the RimM family. As to quaternary structure, binds ribosomal protein uS19.

It is found in the cytoplasm. Its function is as follows. An accessory protein needed during the final step in the assembly of 30S ribosomal subunit, possibly for assembly of the head region. Essential for efficient processing of 16S rRNA. May be needed both before and after RbfA during the maturation of 16S rRNA. It has affinity for free ribosomal 30S subunits but not for 70S ribosomes. The polypeptide is Ribosome maturation factor RimM (Leifsonia xyli subsp. xyli (strain CTCB07)).